The primary structure comprises 207 residues: Twist-related protein 1 (207 aa).

The span at 1-18 (MMQDVSSSPVSPADDSLS) shows a compositional bias: low complexity. A disordered region spans residues 1–110 (MMQDVSSSPV…GGGSPQSYEE (110 aa)). A compositionally biased stretch (basic residues) spans 34-43 (RGGRKRRSSR). Gly residues-rich tracts occupy residues 46–65 (AGGG…GGDE) and 80–104 (GCGG…GGGS). A bHLH domain is found at 113-164 (TQRVMANVRERQRTQSLNEAFAALRKIIPTLPSDKLSKIQTLKLAARYIDFL). A sufficient for transactivation activity region spans residues 166-196 (QVLQSDELDSKMASCSYVAHERLSYAFSVWR).

As to quaternary structure, efficient DNA binding requires dimerization with another bHLH protein. Homodimer or heterodimer with E proteins such as TCF3. ID1 binds preferentially to TCF3 but does not interact efficiently with TWIST1 so ID1 levels control the amount of TCF3 available to dimerize with TWIST and thus determine the type of dimer formed.

The protein localises to the nucleus. Functionally, acts as a transcriptional regulator. Inhibits myogenesis by sequestrating E proteins, inhibiting trans-activation by MEF2, and inhibiting DNA-binding by MYOD1 through physical interaction. This interaction probably involves the basic domains of both proteins. Also represses expression of pro-inflammatory cytokines such as TNFA and IL1B. Regulates cranial suture patterning and fusion. Activates transcription as a heterodimer with E proteins. Regulates gene expression differentially, depending on dimer composition. Homodimers induce expression of FGFR2 and POSTN while heterodimers repress FGFR2 and POSTN expression and induce THBS1 expression. Heterodimerization is also required for osteoblast differentiation. Represses the activity of the circadian transcriptional activator: NPAS2-BMAL1 heterodimer. The polypeptide is Twist-related protein 1 (TWIST1) (Cebus capucinus (White-faced sapajou)).